The following is a 412-amino-acid chain: Imidazolonepropionase (412 aa).

Histidine 76 and histidine 78 together coordinate Fe(3+). Zn(2+) is bound by residues histidine 76 and histidine 78. 3 residues coordinate 4-imidazolone-5-propanoate: arginine 85, tyrosine 148, and histidine 181. An N-formimidoyl-L-glutamate-binding site is contributed by tyrosine 148. Histidine 242 contacts Fe(3+). Histidine 242 provides a ligand contact to Zn(2+). Residue glutamate 245 coordinates 4-imidazolone-5-propanoate. Aspartate 317 provides a ligand contact to Fe(3+). Residue aspartate 317 coordinates Zn(2+). 2 residues coordinate N-formimidoyl-L-glutamate: asparagine 319 and glycine 321. Serine 322 contributes to the 4-imidazolone-5-propanoate binding site.

Belongs to the metallo-dependent hydrolases superfamily. HutI family. Zn(2+) serves as cofactor. The cofactor is Fe(3+).

It is found in the cytoplasm. The enzyme catalyses 4-imidazolone-5-propanoate + H2O = N-formimidoyl-L-glutamate. The protein operates within amino-acid degradation; L-histidine degradation into L-glutamate; N-formimidoyl-L-glutamate from L-histidine: step 3/3. Its function is as follows. Catalyzes the hydrolytic cleavage of the carbon-nitrogen bond in imidazolone-5-propanoate to yield N-formimidoyl-L-glutamate. It is the third step in the universal histidine degradation pathway. This chain is Imidazolonepropionase, found in Staphylococcus aureus (strain Mu50 / ATCC 700699).